The chain runs to 253 residues: Triosephosphate isomerase (253 aa).

9-11 contacts substrate; sequence NWK. The active-site Electrophile is H95. E167 functions as the Proton acceptor in the catalytic mechanism. Substrate is bound by residues G173, S213, and 234-235; that span reads GG. The residue at position 213 (S213) is a Phosphoserine.

This sequence belongs to the triosephosphate isomerase family. Homodimer.

Its subcellular location is the cytoplasm. It carries out the reaction D-glyceraldehyde 3-phosphate = dihydroxyacetone phosphate. The protein operates within carbohydrate biosynthesis; gluconeogenesis. It participates in carbohydrate degradation; glycolysis; D-glyceraldehyde 3-phosphate from glycerone phosphate: step 1/1. Functionally, involved in the gluconeogenesis. Catalyzes stereospecifically the conversion of dihydroxyacetone phosphate (DHAP) to D-glyceraldehyde-3-phosphate (G3P). The protein is Triosephosphate isomerase of Bacillus pumilus (strain SAFR-032).